A 421-amino-acid chain; its full sequence is ATP-dependent RNA helicase RhlB (421 aa).

A Q motif motif is present at residues 9-37 (QKFSDFALHPVVVQALEKKGFYNCTPIQA). A Helicase ATP-binding domain is found at 40 to 219 (LPLTLAGRDV…FEQMNNAEYV (180 aa)). 53-60 (AQTGTGKT) is a binding site for ATP. The DEAD box signature appears at 165–168 (DEAD). In terms of domain architecture, Helicase C-terminal spans 245–390 (RLLQTLIEEE…VSKYNPDALL (146 aa)). The segment at 390–421 (LSELPPPKRLSRPRTGNGPRRSGAPRNRRRTG) is disordered. The span at 405 to 414 (GNGPRRSGAP) shows a compositional bias: low complexity.

The protein belongs to the DEAD box helicase family. RhlB subfamily. As to quaternary structure, component of the RNA degradosome, which is a multiprotein complex involved in RNA processing and mRNA degradation.

It localises to the cytoplasm. The enzyme catalyses ATP + H2O = ADP + phosphate + H(+). Its function is as follows. DEAD-box RNA helicase involved in RNA degradation. Has RNA-dependent ATPase activity and unwinds double-stranded RNA. This chain is ATP-dependent RNA helicase RhlB, found in Cronobacter sakazakii (strain ATCC BAA-894) (Enterobacter sakazakii).